We begin with the raw amino-acid sequence, 290 residues long: GTPase Era (290 aa).

Residues 2–169 (KSGFVSIIGR…KDKIYENLQE (168 aa)) form the Era-type G domain. Positions 10–17 (GRPSTGKS) are G1. 10-17 (GRPSTGKS) is a GTP binding site. Residues 36 to 40 (QTTRN) form a G2 region. The segment at 57 to 60 (DTPG) is G3. GTP-binding positions include 57–61 (DTPGF) and 119–122 (NKID). Residues 119–122 (NKID) form a G4 region. The G5 stretch occupies residues 148–150 (ISA). One can recognise a KH type-2 domain in the interval 200 to 276 (LKEELPYSLY…DLFLQVKLRK (77 aa)).

The protein belongs to the TRAFAC class TrmE-Era-EngA-EngB-Septin-like GTPase superfamily. Era GTPase family. Monomer.

It localises to the cytoplasm. The protein resides in the cell inner membrane. In terms of biological role, an essential GTPase that binds both GDP and GTP, with rapid nucleotide exchange. Plays a role in 16S rRNA processing and 30S ribosomal subunit biogenesis and possibly also in cell cycle regulation and energy metabolism. This is GTPase Era from Borrelia turicatae (strain 91E135).